The chain runs to 431 residues: Phosphoribosylamine--glycine ligase (431 aa).

Residues 109-316 enclose the ATP-grasp domain; it reads KDFLARHGIP…LVDLVEAAID (208 aa). 135 to 196 lines the ATP pocket; that stretch reads VREKGAPIVV…EEFLDGEEAS (62 aa). Residues Glu286 and Asn288 each contribute to the Mg(2+) site.

Belongs to the GARS family. It depends on Mg(2+) as a cofactor. The cofactor is Mn(2+).

The catalysed reaction is 5-phospho-beta-D-ribosylamine + glycine + ATP = N(1)-(5-phospho-beta-D-ribosyl)glycinamide + ADP + phosphate + H(+). The protein operates within purine metabolism; IMP biosynthesis via de novo pathway; N(1)-(5-phospho-D-ribosyl)glycinamide from 5-phospho-alpha-D-ribose 1-diphosphate: step 2/2. The protein is Phosphoribosylamine--glycine ligase of Xanthomonas campestris pv. campestris (strain ATCC 33913 / DSM 3586 / NCPPB 528 / LMG 568 / P 25).